A 278-amino-acid chain; its full sequence is Urease accessory protein UreD (278 aa).

This sequence belongs to the UreD family. UreD, UreF and UreG form a complex that acts as a GTP-hydrolysis-dependent molecular chaperone, activating the urease apoprotein by helping to assemble the nickel containing metallocenter of UreC. The UreE protein probably delivers the nickel.

The protein resides in the cytoplasm. Functionally, required for maturation of urease via the functional incorporation of the urease nickel metallocenter. This is Urease accessory protein UreD from Deinococcus radiodurans (strain ATCC 13939 / DSM 20539 / JCM 16871 / CCUG 27074 / LMG 4051 / NBRC 15346 / NCIMB 9279 / VKM B-1422 / R1).